A 654-amino-acid chain; its full sequence is APC membrane recruitment protein 2 (654 aa).

Disordered stretches follow at residues Met1–Leu105, Glu224–Gln289, Ile316–Ser369, and Pro381–Lys654. A compositionally biased stretch (pro residues) spans Glu9 to Pro18. The segment covering Glu60–Leu70 has biased composition (basic and acidic residues). Positions Pro427–Pro454 are enriched in basic and acidic residues. A compositionally biased stretch (polar residues) spans Ser468–Ser479. Residues Ser565–Ser575 show a composition bias toward low complexity. Positions Phe576–Pro586 are enriched in polar residues. The segment covering Ser601–Pro621 has biased composition (low complexity). The segment covering Gly644–Lys654 has biased composition (polar residues).

It belongs to the Amer family.

The protein resides in the cell membrane. Functionally, negative regulator of the canonical Wnt signaling pathway involved in neuroectodermal patterning. Acts by specifically binding phosphatidylinositol 4,5-bisphosphate (PtdIns(4,5)P2), translocating to the cell membrane and interacting with key regulators of the canonical Wnt signaling pathway, such as components of the beta-catenin destruction complex. The sequence is that of APC membrane recruitment protein 2 (amer2) from Danio rerio (Zebrafish).